Reading from the N-terminus, the 215-residue chain is Chaperone protein TorD (215 aa).

Belongs to the TorD/DmsD family. TorD subfamily.

The protein resides in the cytoplasm. In terms of biological role, involved in the biogenesis of TorA. Acts on TorA before the insertion of the molybdenum cofactor and, as a result, probably favors a conformation of the apoenzyme that is competent for acquiring the cofactor. In Vibrio vulnificus (strain YJ016), this protein is Chaperone protein TorD.